Reading from the N-terminus, the 255-residue chain is Hydroxyacylglutathione hydrolase (255 aa).

His56, His58, Asp60, His61, His114, Asp133, and His171 together coordinate Zn(2+).

It belongs to the metallo-beta-lactamase superfamily. Glyoxalase II family. As to quaternary structure, monomer. The cofactor is Zn(2+).

The catalysed reaction is an S-(2-hydroxyacyl)glutathione + H2O = a 2-hydroxy carboxylate + glutathione + H(+). Its pathway is secondary metabolite metabolism; methylglyoxal degradation; (R)-lactate from methylglyoxal: step 2/2. Functionally, thiolesterase that catalyzes the hydrolysis of S-D-lactoyl-glutathione to form glutathione and D-lactic acid. In Rhodopseudomonas palustris (strain BisB5), this protein is Hydroxyacylglutathione hydrolase.